Reading from the N-terminus, the 293-residue chain is MSLFDWFADRRKGQYVGNVKQEPEEGDGLWSKCPECGLVVYLKDLRLNASVCAGCGYHHRIDSSERLALIADPESFQPLNEHLAPIDPLGFKDRRAYADRLRESQSATGLNDGVVTGLCRVDGIGMGLAVMDFRFMGGSMGSVVGEKITRLVEECTKRKLPLLIVCASGGARMQEGMLSLMQMAKISGALERHREAELLYLPLLTHPTTGGVTASFAMLGDLILAEPKALIGFAGRRVIEQTLREKLPDNFQTAEYLQDHGFVDTIIPRTQFRSTLASLLRLHGSKSLELTNA.

Positions 29–293 (LWSKCPECGL…GSKSLELTNA (265 aa)) constitute a CoA carboxyltransferase N-terminal domain. The Zn(2+) site is built by C33, C36, C52, and C55. The segment at 33–55 (CPECGLVVYLKDLRLNASVCAGC) adopts a C4-type zinc-finger fold.

This sequence belongs to the AccD/PCCB family. As to quaternary structure, acetyl-CoA carboxylase is a heterohexamer composed of biotin carboxyl carrier protein (AccB), biotin carboxylase (AccC) and two subunits each of ACCase subunit alpha (AccA) and ACCase subunit beta (AccD). Requires Zn(2+) as cofactor.

It localises to the cytoplasm. The enzyme catalyses N(6)-carboxybiotinyl-L-lysyl-[protein] + acetyl-CoA = N(6)-biotinyl-L-lysyl-[protein] + malonyl-CoA. The protein operates within lipid metabolism; malonyl-CoA biosynthesis; malonyl-CoA from acetyl-CoA: step 1/1. Its function is as follows. Component of the acetyl coenzyme A carboxylase (ACC) complex. Biotin carboxylase (BC) catalyzes the carboxylation of biotin on its carrier protein (BCCP) and then the CO(2) group is transferred by the transcarboxylase to acetyl-CoA to form malonyl-CoA. In Synechococcus sp. (strain CC9902), this protein is Acetyl-coenzyme A carboxylase carboxyl transferase subunit beta.